Here is a 257-residue protein sequence, read N- to C-terminus: 5-oxoprolinase subunit A (257 aa).

It belongs to the LamB/PxpA family. As to quaternary structure, forms a complex composed of PxpA, PxpB and PxpC.

It catalyses the reaction 5-oxo-L-proline + ATP + 2 H2O = L-glutamate + ADP + phosphate + H(+). Catalyzes the cleavage of 5-oxoproline to form L-glutamate coupled to the hydrolysis of ATP to ADP and inorganic phosphate. The sequence is that of 5-oxoprolinase subunit A from Fusobacterium nucleatum subsp. nucleatum (strain ATCC 25586 / DSM 15643 / BCRC 10681 / CIP 101130 / JCM 8532 / KCTC 2640 / LMG 13131 / VPI 4355).